Here is a 386-residue protein sequence, read N- to C-terminus: Protein-glutamate methylesterase/protein-glutamine glutaminase (386 aa).

Positions 4–121 (KVLVVDDSAF…ARNRDEAVKT (118 aa)) constitute a Response regulatory domain. D55 is modified (4-aspartylphosphate). The tract at residues 133-161 (PVSRTSARASTPPPVAKQPERSSEPTTAL) is disordered. One can recognise a CheB-type methylesterase domain in the interval 190 to 384 (INRAYQLLAI…KAIMKEVGYS (195 aa)). Active-site residues include S202, H229, and D326.

Belongs to the CheB family. In terms of processing, phosphorylated by CheA. Phosphorylation of the N-terminal regulatory domain activates the methylesterase activity.

It is found in the cytoplasm. It catalyses the reaction [protein]-L-glutamate 5-O-methyl ester + H2O = L-glutamyl-[protein] + methanol + H(+). The enzyme catalyses L-glutaminyl-[protein] + H2O = L-glutamyl-[protein] + NH4(+). Involved in chemotaxis. Part of a chemotaxis signal transduction system that modulates chemotaxis in response to various stimuli. Catalyzes the demethylation of specific methylglutamate residues introduced into the chemoreceptors (methyl-accepting chemotaxis proteins or MCP) by CheR. Also mediates the irreversible deamidation of specific glutamine residues to glutamic acid. The polypeptide is Protein-glutamate methylesterase/protein-glutamine glutaminase (Idiomarina loihiensis (strain ATCC BAA-735 / DSM 15497 / L2-TR)).